The primary structure comprises 567 residues: TGF-beta receptor type-2 (567 aa).

Positions 1–23 (MGRGLLRGLWPLHIVLWTRIAST) are cleaved as a signal peptide. Residues 24-166 (IPPHVPKSVN…SPDLLLVIIQ (143 aa)) are Extracellular-facing. 6 cysteine pairs are disulfide-bonded: Cys51–Cys84, Cys54–Cys71, Cys61–Cys67, Cys77–Cys101, Cys121–Cys136, and Cys138–Cys143. Asn70 and Asn94 each carry an N-linked (GlcNAc...) asparagine glycan. The helical transmembrane segment at 167–187 (VTGVSLLPPLGIAIAVIIIFY) threads the bilayer. At 188-567 (CYRVHRQQKL…PEDGSLNTTK (380 aa)) the chain is on the cytoplasmic side. The 303-residue stretch at 244 to 546 (IELDTLVGKG…RFSELEHPER (303 aa)) folds into the Protein kinase domain. ATP-binding positions include 250–258 (VGKGRFAEV) and Lys277. Asp379 acts as the Proton acceptor in catalysis. Phosphoserine occurs at positions 409, 548, and 553. Positions 545–567 (ERLSGRSCSQEKIPEDGSLNTTK) are disordered.

It belongs to the protein kinase superfamily. TKL Ser/Thr protein kinase family. TGFB receptor subfamily. Homodimer. Heterohexamer; TGFB1, TGFB2 and TGFB3 homodimeric ligands assemble a functional receptor composed of two TGFBR1 and TGFBR2 heterodimers to form a ligand-receptor heterohexamer. The respective affinity of TGFRB1 and TGFRB2 for the ligands may modulate the kinetics of assembly of the receptor and may explain the different biological activities of TGFB1, TGFB2 and TGFB3. Component of a complex composed of TSC22D1 (via N-terminus), TGFBR1 and TGFBR2; the interaction between TSC22D1 and TGFBR1 is inhibited by SMAD7 and promoted by TGFB1. Interacts with DAXX. Interacts with DYNLT4. Interacts with ZFYVE9; ZFYVE9 recruits SMAD2 and SMAD3 to the TGF-beta receptor. Interacts with and is activated by SCUBE3; this interaction does not affect TGFB1-binding to TGFBR2. Interacts with VPS39; this interaction is independent of the receptor kinase activity and of the presence of TGF-beta. Interacts with CLU. Requires Mg(2+) as cofactor. Mn(2+) is required as a cofactor. In terms of processing, phosphorylated on a Ser/Thr residue in the cytoplasmic domain. Widely expressed in adult. Expressed primarily in mesenchyme and epidermis of the midgestational fetus.

The protein localises to the cell membrane. Its subcellular location is the membrane raft. The catalysed reaction is L-threonyl-[receptor-protein] + ATP = O-phospho-L-threonyl-[receptor-protein] + ADP + H(+). It carries out the reaction L-seryl-[receptor-protein] + ATP = O-phospho-L-seryl-[receptor-protein] + ADP + H(+). In terms of biological role, transmembrane serine/threonine kinase forming with the TGF-beta type I serine/threonine kinase receptor, TGFBR1, the non-promiscuous receptor for the TGF-beta cytokines TGFB1, TGFB2 and TGFB3. Transduces the TGFB1, TGFB2 and TGFB3 signal from the cell surface to the cytoplasm and is thus regulating a plethora of physiological and pathological processes including cell cycle arrest in epithelial and hematopoietic cells, control of mesenchymal cell proliferation and differentiation, wound healing, extracellular matrix production, immunosuppression and carcinogenesis. The formation of the receptor complex composed of 2 TGFBR1 and 2 TGFBR2 molecules symmetrically bound to the cytokine dimer results in the phosphorylation and the activation of TGFRB1 by the constitutively active TGFBR2. Activated TGFBR1 phosphorylates SMAD2 which dissociates from the receptor and interacts with SMAD4. The SMAD2-SMAD4 complex is subsequently translocated to the nucleus where it modulates the transcription of the TGF-beta-regulated genes. This constitutes the canonical SMAD-dependent TGF-beta signaling cascade. Also involved in non-canonical, SMAD-independent TGF-beta signaling pathways. Has transforming growth factor beta-activated receptor activity. The sequence is that of TGF-beta receptor type-2 (Tgfbr2) from Mus musculus (Mouse).